Here is a 375-residue protein sequence, read N- to C-terminus: MDAIHLGMSSAPLVKHTNGVGLKAHRPRVMSKSGHSNVRIDKVDGIYLLYLQDLWTTVIDMKWRYKLTLFAATFVMTWFLFGVVYYAIAFIHGDLQLGESNSNHTPCIMKVDSLTGAFLFSLESQTTIGYGVRSITEECPHAIFLLVAQLVITTLIEIFITGTFLAKIARPKKRAETIKFSHCAVISKQNGKLCLVIQVANMRKSLLIQCQLSGKLLQTHVTKEGERILLNQATVKFHVDSSSESPFLILPMTFYHVLDETSPLRDLTPQNLKEKEFELVVLLNATVESTSAVCQSRTSYIPEEIYWGFEFVPVVSLSKNGKYVADFSQFEQIRKSPDCTFYCADSEKQKLEEQYRQEDQRERELRSLLLQQSNV.

Residues 1-60 (MDAIHLGMSSAPLVKHTNGVGLKAHRPRVMSKSGHSNVRIDKVDGIYLLYLQDLWTTVID) are Cytoplasmic-facing. A helical membrane pass occupies residues 61-87 (MKWRYKLTLFAATFVMTWFLFGVVYYA). Topologically, residues 88–113 (IAFIHGDLQLGESNSNHTPCIMKVDS) are extracellular. The helical; Pore-forming intramembrane region spans 114–130 (LTGAFLFSLESQTTIGY). The short motif at 127-132 (TIGYGV) is the Selectivity filter element. The Extracellular segment spans residues 131 to 139 (GVRSITEEC). A helical transmembrane segment spans residues 140 to 165 (PHAIFLLVAQLVITTLIEIFITGTFL). The Cytoplasmic segment spans residues 166-375 (AKIARPKKRA…RSLLLQQSNV (210 aa)).

This sequence belongs to the inward rectifier-type potassium channel (TC 1.A.2.1) family. KCNJ15 subfamily. As to quaternary structure, can form heteromultimeric channels with Kir5.1/KCNJ16. Interacts with PATJ. In terms of tissue distribution, expressed in the proximal segment of the nephron.

It localises to the membrane. The protein resides in the cell membrane. The enzyme catalyses K(+)(in) = K(+)(out). With respect to regulation, channel activity is regulated by variations of cytosolic pH; reversibly inhibited by acidic pH values. Inhibited by Ba(2+) and Cs(+) in a voltage-dependent manner. Its function is as follows. Inward rectifier potassium channels are characterized by a greater tendency to allow potassium to flow into the cell rather than out of it. Their voltage dependence is regulated by the concentration of extracellular potassium; as external potassium is raised, the voltage range of the channel opening shifts to more positive voltages. The inward rectification is mainly due to the blockage of outward current by internal magnesium. This chain is ATP-sensitive inward rectifier potassium channel 15 (Kcnj15), found in Mus musculus (Mouse).